We begin with the raw amino-acid sequence, 300 residues long: Ribosomal protein bS6--L-glutamate ligase (300 aa).

The region spanning 104-287 (MQLLARQGID…IAGKMIRWIE (184 aa)) is the ATP-grasp domain. ATP contacts are provided by residues Lys-141, 178 to 179 (EY), Asp-187, and 211 to 213 (RSN). The Mg(2+) site is built by Asp-248, Glu-260, and Asn-262. Residues Asp-248, Glu-260, and Asn-262 each contribute to the Mn(2+) site.

The protein belongs to the RimK family. Mg(2+) serves as cofactor. Mn(2+) is required as a cofactor.

In terms of biological role, an L-glutamate ligase that catalyzes the ATP-dependent post-translational addition of glutamate residues to the C-terminus of ribosomal protein bS6 (RpsF). Is also able to catalyze the synthesis of poly-alpha-glutamate in vitro, via ATP hydrolysis from unprotected glutamate as substrate. The number of glutamate residues added to either RpsF or to poly-alpha-glutamate changes with pH. The polypeptide is Ribosomal protein bS6--L-glutamate ligase (Escherichia coli O7:K1 (strain IAI39 / ExPEC)).